The chain runs to 147 residues: Hemoglobin subunit epsilon (147 aa).

Residues 3–147 form the Globin domain; sequence HFTAEEKNAI…VANALAHKYH (145 aa). At Ser-51 the chain carries Phosphoserine. Heme b-binding residues include His-64 and His-93.

Belongs to the globin family. As to quaternary structure, heterotetramer of two alpha chains and two epsilon chains in early embryonic hemoglobin Gower-2; two zeta chains and two epsilon chains in early embryonic hemoglobin Gower-1. In terms of tissue distribution, red blood cells.

In terms of biological role, the epsilon chain is a beta-type chain of early mammalian embryonic hemoglobin. The polypeptide is Hemoglobin subunit epsilon (HBE1) (Sminthopsis crassicaudata (Fat-tailed dunnart)).